Reading from the N-terminus, the 241-residue chain is Uracil-DNA glycosylase (241 aa).

D73 acts as the Proton acceptor in catalysis.

It belongs to the uracil-DNA glycosylase (UDG) superfamily. UNG family.

It localises to the cytoplasm. It carries out the reaction Hydrolyzes single-stranded DNA or mismatched double-stranded DNA and polynucleotides, releasing free uracil.. Excises uracil residues from the DNA which can arise as a result of misincorporation of dUMP residues by DNA polymerase or due to deamination of cytosine. This is Uracil-DNA glycosylase from Agrobacterium fabrum (strain C58 / ATCC 33970) (Agrobacterium tumefaciens (strain C58)).